We begin with the raw amino-acid sequence, 1359 residues long: Junctional cadherin 5-associated protein (1359 aa).

Disordered stretches follow at residues 1–147, 249–411, 454–554, 591–813, 840–1076, 1105–1141, 1157–1207, 1225–1260, and 1276–1359; these read MYSV…SLPV, PLNE…PAHP, NSSP…TCET, SHLP…CNSK, KELQ…TIEI, RAGQ…PRVS, PLFV…KDVE, SVAG…DRLM, and FRNA…VERV. Over residues 15–28 the composition is skewed to basic and acidic residues; that stretch reads LSRDPPASREDNPK. Composition is skewed to polar residues over residues 82–91 and 98–112; these read PQSTSASRTS and QPPS…TGND. Over residues 120–135 the composition is skewed to basic and acidic residues; that stretch reads RQEARSQKPREHENLE. The span at 302 to 321 shows a compositional bias: low complexity; it reads QQSRGGADSSDSQDSQQMDA. Residues 335 to 353 show a composition bias toward pro residues; sequence LEPPVYVPPPSYRSPPQNI. Polar residues predominate over residues 539–554; sequence RQVSSPYSQGESTCET. Over residues 591–613 the composition is skewed to basic and acidic residues; the sequence is SHLPDRDMDNNDLKPSADQKNGS. 3 stretches are compositionally biased toward polar residues: residues 619–632, 689–704, and 756–773; these read LQEQ…STDL, QQTQ…SSQL, and LSPS…SVDQ. Low complexity predominate over residues 849-859; that stretch reads SSSSSSSSSSS. Basic and acidic residues predominate over residues 868–880; that stretch reads QENRAHCRQEDVG. The segment covering 1003 to 1013 has biased composition (polar residues); the sequence is PKITSAFSSVK. 2 positions are modified to phosphoserine: Ser-1044 and Ser-1050. Position 1194 is a phosphoserine (Ser-1194). Ser-1281 is modified (phosphoserine). The span at 1324-1342 shows a compositional bias: basic and acidic residues; sequence SISREEKEHPAAQKEKSMD.

Its subcellular location is the cell junction. The protein resides in the adherens junction. This Homo sapiens (Human) protein is Junctional cadherin 5-associated protein.